The primary structure comprises 432 residues: Protein arginine N-methyltransferase 2 (432 aa).

The span at 1–11 (MESSSECSSIS) shows a compositional bias: low complexity. The interval 1–22 (MESSSECSSISDFQDSTEGDDA) is disordered. Residues 29-88 (LCMREYVVICDYVATDNTQLSLCSGDKVLLLNAVSQDWWWVNHNGTCGYVPASHLHDALN) enclose the SH3 domain. The region spanning 101-405 (DEEYYGSYKT…FERNSVWRRH (305 aa)) is the SAM-dependent MTase PRMT-type domain. Positions 114, 123, 147, 170, and 199 each coordinate S-adenosyl-L-methionine. Residues Glu213 and Glu222 contribute to the active site.

This sequence belongs to the class I-like SAM-binding methyltransferase superfamily. Protein arginine N-methyltransferase family. In terms of assembly, interacts with ctnnb1.

The protein localises to the cytoplasm. It is found in the nucleus. The enzyme catalyses L-arginyl-[protein] + 2 S-adenosyl-L-methionine = N(omega),N(omega)-dimethyl-L-arginyl-[protein] + 2 S-adenosyl-L-homocysteine + 2 H(+). Arginine methyltransferase that methylates the guanidino nitrogens of arginyl residues in proteins such as histones. Involved in growth regulation. Involved in embryonic dorsal development. The sequence is that of Protein arginine N-methyltransferase 2 (prmt2) from Xenopus laevis (African clawed frog).